A 291-amino-acid chain; its full sequence is Probable protein S-acyltransferase 12 (291 aa).

The next 2 membrane-spanning stretches (helical) occupy residues 14–34 (GYFM…AVVV) and 49–69 (LSAL…MLLW). A DHHC domain is found at 111 to 161 (GYCTKCRNVKPPRCHHCSVCQRCVLKMDHHCVWIVNCVGARNYKFFLLFLF). C141 acts as the S-palmitoyl cysteine intermediate in catalysis. 2 helical membrane-spanning segments follow: residues 155-175 (FFLL…IVLL) and 198-218 (LVLA…FVVM).

It belongs to the DHHC palmitoyltransferase family.

The protein resides in the cell membrane. It carries out the reaction L-cysteinyl-[protein] + hexadecanoyl-CoA = S-hexadecanoyl-L-cysteinyl-[protein] + CoA. In terms of biological role, palmitoyl acyltransferase. This Arabidopsis thaliana (Mouse-ear cress) protein is Probable protein S-acyltransferase 12 (PAT12).